The primary structure comprises 132 residues: Aspartate 1-decarboxylase (132 aa).

Serine 25 acts as the Schiff-base intermediate with substrate; via pyruvic acid in catalysis. Serine 25 is modified (pyruvic acid (Ser)). Threonine 57 is a substrate binding site. Tyrosine 58 serves as the catalytic Proton donor. 73 to 75 (GAA) serves as a coordination point for substrate.

This sequence belongs to the PanD family. As to quaternary structure, heterooctamer of four alpha and four beta subunits. It depends on pyruvate as a cofactor. Post-translationally, is synthesized initially as an inactive proenzyme, which is activated by self-cleavage at a specific serine bond to produce a beta-subunit with a hydroxyl group at its C-terminus and an alpha-subunit with a pyruvoyl group at its N-terminus.

It localises to the cytoplasm. It carries out the reaction L-aspartate + H(+) = beta-alanine + CO2. The protein operates within cofactor biosynthesis; (R)-pantothenate biosynthesis; beta-alanine from L-aspartate: step 1/1. Catalyzes the pyruvoyl-dependent decarboxylation of aspartate to produce beta-alanine. In Heliobacterium modesticaldum (strain ATCC 51547 / Ice1), this protein is Aspartate 1-decarboxylase.